Here is an 81-residue protein sequence, read N- to C-terminus: Short neurotoxin 1 (81 aa).

The signal sequence occupies residues 1 to 21 (MKTLLLSPVVVTIVCLDLGYT). Intrachain disulfides connect cysteine 24-cysteine 43, cysteine 38-cysteine 60, cysteine 62-cysteine 73, and cysteine 74-cysteine 79.

This sequence belongs to the three-finger toxin family. Short-chain subfamily. Type I alpha-neurotoxin sub-subfamily. As to expression, expressed by the venom gland.

Its subcellular location is the secreted. Its function is as follows. Binds to muscle nicotinic acetylcholine receptor (nAChR) and inhibit acetylcholine from binding to the receptor, thereby impairing neuromuscular transmission. This is Short neurotoxin 1 from Hydrophis peronii (Spiny-headed seasnake).